The chain runs to 312 residues: Aspartate carbamoyltransferase catalytic subunit (312 aa).

2 residues coordinate carbamoyl phosphate: R58 and T59. K86 contributes to the L-aspartate binding site. Residues R108, H136, and Q139 each coordinate carbamoyl phosphate. L-aspartate is bound by residues R169 and R223. Carbamoyl phosphate is bound by residues G264 and P265.

This sequence belongs to the aspartate/ornithine carbamoyltransferase superfamily. ATCase family. Heterododecamer (2C3:3R2) of six catalytic PyrB chains organized as two trimers (C3), and six regulatory PyrI chains organized as three dimers (R2).

The enzyme catalyses carbamoyl phosphate + L-aspartate = N-carbamoyl-L-aspartate + phosphate + H(+). The protein operates within pyrimidine metabolism; UMP biosynthesis via de novo pathway; (S)-dihydroorotate from bicarbonate: step 2/3. Its function is as follows. Catalyzes the condensation of carbamoyl phosphate and aspartate to form carbamoyl aspartate and inorganic phosphate, the committed step in the de novo pyrimidine nucleotide biosynthesis pathway. The polypeptide is Aspartate carbamoyltransferase catalytic subunit (Acetivibrio thermocellus (strain ATCC 27405 / DSM 1237 / JCM 9322 / NBRC 103400 / NCIMB 10682 / NRRL B-4536 / VPI 7372) (Clostridium thermocellum)).